The chain runs to 3421 residues: Hemocyanin 2 (3421 aa).

Residues 1–19 (MWTILALLTATLLFEGAFS) form the signal peptide. Residues 20–442 (VDTVVRKNVD…KPPVPVAQAN (423 aa)) form a functional unit a (wall) region. Residue His-62 participates in Cu cation binding. Cys-68 and Cys-78 are oxidised to a cystine. The segment at residues 79–81 (CLH) is a cross-link (2'-(S-cysteinyl)-histidine (Cys-His)). Residues His-81, His-90, His-200, His-204, and His-231 each coordinate Cu cation. Intrachain disulfides connect Cys-190-Cys-257 and Cys-344-Cys-356. N-linked (GlcNAc...) asparagine glycosylation occurs at Asn-408. Positions 443–853 (LAVRKNINDL…RADAKDFGHS (411 aa)) are functional unit b (wall). His-483 contributes to the Cu cation binding site. Cys-489 and Cys-500 are disulfide-bonded. A cross-link (2'-(S-cysteinyl)-histidine (Cys-His)) is located at residues 501–503 (CVH). Residues His-503, His-512, His-622, His-626, His-653, and His-894 each coordinate Cu cation. A disulfide bridge links Cys-612 with Cys-678. One copy of the WD 1 repeat lies at 632 to 673 (SEKYSMSSLHYTAFDPIFYLHHSNVDRLWAIWQALQIRRGKS). A functional unit c (wall) region spans residues 854–1275 (RKIRKAVDSL…DEYREAVTSA (422 aa)). A disulfide bridge links Cys-900 with Cys-911. The segment at residues 912–914 (CVH) is a cross-link (2'-(S-cysteinyl)-histidine (Cys-His)). Residues His-914, His-923, His-1033, His-1037, and His-1063 each contribute to the Cu cation site. 2 disulfide bridges follow: Cys-1023/Cys-1090 and Cys-1180/Cys-1187. The stretch at 1043-1084 (NEPYSMSSLRYTTYDPIFFLHRSNTDRLWAIWQALQKYRGKP) is one WD 2 repeat. An N-linked (GlcNAc...) asparagine glycan is attached at Asn-1183. Positions 1276-1685 (SHIRKNIRDL…NIYYDGLSQH (410 aa)) are functional unit d (wall). Position 1313 (His-1313) interacts with Cu cation. A disulfide bridge connects residues Cys-1319 and Cys-1328. The 2'-(S-cysteinyl)-histidine (Cys-His) cross-link spans 1329-1331 (CVH). Cu cation is bound by residues His-1331 and His-1340. A WD 3 repeat occupies 1387–1425 (QTFDPNPFFRGHIAFENAVTSRDPQPELWDNKDFYENVM). 2 cysteine pairs are disulfide-bonded: Cys-1434–Cys-1501 and Cys-1590–Cys-1599. The Cu cation site is built by His-1444, His-1448, and His-1475. A WD 4 repeat occupies 1454-1495 (RAKYSLSSLDYTAFDPVFFLHHANVDRIWAIWQDLQRYRKKP). Asn-1653 carries N-linked (GlcNAc...) asparagine glycosylation. Residues 1686–2102 (NLVRKEVSSL…HGINVRHVGR (417 aa)) are functional unit e (wall). His-1726 serves as a coordination point for Cu cation. A disulfide bridge links Cys-1732 with Cys-1743. Positions 1744 to 1746 (CLH) form a cross-link, 2'-(S-cysteinyl)-histidine (Cys-His). Cu cation is bound by residues His-1746, His-1755, His-1868, His-1872, and His-1899. Cystine bridges form between Cys-1858–Cys-1925 and Cys-2014–Cys-2020. A WD 5 repeat occupies 1878–1919 (SKTHSIGHLHYASYDPLFYIHHSQTDRIWAIWQALQEHRGLS). Residues 2103–2522 (NRIRMELSEL…DDHGSDHIAG (420 aa)) form a functional unit f (wall) region. Residue His-2143 coordinates Cu cation. The cysteines at positions 2149 and 2159 are disulfide-linked. Residues 2160-2162 (CIH) constitute a cross-link (2'-(S-cysteinyl)-histidine (Cys-His)). 5 residues coordinate Cu cation: His-2162, His-2171, His-2281, His-2285, and His-2312. One copy of the WD 6 repeat lies at 2168–2204 (PHWHRLYTLQMDMALLSHGSAVAIPYWDWTKPISKLP). Intrachain disulfides connect Cys-2271–Cys-2338 and Cys-2425–Cys-2431. The segment at 2523-2929 (SGVRKDVTSL…SGHDHSERHD (407 aa)) is functional unit g (internal arc). His-2563 lines the Cu cation pocket. An intrachain disulfide couples Cys-2569 to Cys-2579. The segment at residues 2580-2582 (CTH) is a cross-link (2'-(S-cysteinyl)-histidine (Cys-His)). The Cu cation site is built by His-2582, His-2591, His-2691, His-2695, and His-2722. Cystine bridges form between Cys-2681/Cys-2748 and Cys-2835/Cys-2841. One copy of the WD 7 repeat lies at 2700 to 2742 (GHTPYGMSSLEYTAYDPLFYLHHSNTDRIWAIWQALQKYRGFQ). The segment at 2898–2927 (PSDRIKSPTIEHHGGDHHGGDTSGHDHSER) is disordered. The segment at 2930 to 3421 (GFFRKEVGSL…VRIHIHIEDE (492 aa)) is functional unit h (internal slab). His-2970 provides a ligand contact to Cu cation. An intrachain disulfide couples Cys-2976 to Cys-2986. Positions 2987–2989 (CVH) form a cross-link, 2'-(S-cysteinyl)-histidine (Cys-His). Positions 2989, 2998, 3099, 3103, and 3130 each coordinate Cu cation. Disulfide bonds link Cys-3089/Cys-3156 and Cys-3374/Cys-3407. A WD 8 repeat occupies 3109–3150 (TETYSMSSLAFSAYDPVFMILHSGLDRLWIIWQELQKLRKKP).

The protein belongs to the tyrosinase family. Hemocyanin subfamily. In terms of assembly, homo-didecamer and homo-multidecamer. Post-translationally, probably N-glycosylated. Asn-2489 is buried deeply in the protein which make it inaccessible for sugar attachment. In terms of tissue distribution, hemolymph.

Its subcellular location is the secreted. The protein localises to the extracellular space. Functionally, hemocyanins are copper-containing oxygen carriers occurring freely dissolved in the hemolymph of many mollusks and arthropods. The chain is Hemocyanin 2 from Megathura crenulata (Giant keyhole limpet).